A 485-amino-acid chain; its full sequence is Hexokinase (485 aa).

Phosphoserine is present on Ser-15. One can recognise a Hexokinase domain in the interval 21–468 (ANLMEQIHGL…SGVGAAIIAC (448 aa)). A hexokinase small subdomain region spans residues 75 to 208 (TGKETGDFLA…NIPINVVALI (134 aa)). Lys-111 is an ATP binding site. A glucose-binding region spans residues 151–177 (PLGFTFSYPASQKKINSGVLQRWTKGF). Positions 209-457 (NDTTGTLVAS…HPIQLVAAED (249 aa)) are hexokinase large subdomain.

As to quaternary structure, monomer and homodimer. The monomeric form is active, the homodimeric form inactive.

The enzyme catalyses a D-hexose + ATP = a D-hexose 6-phosphate + ADP + H(+). It catalyses the reaction D-fructose + ATP = D-fructose 6-phosphate + ADP + H(+). It carries out the reaction D-glucose + ATP = D-glucose 6-phosphate + ADP + H(+). Its pathway is carbohydrate metabolism; hexose metabolism. It functions in the pathway carbohydrate degradation; glycolysis; D-glyceraldehyde 3-phosphate and glycerone phosphate from D-glucose: step 1/4. Catalyzes the phosphorylation of hexose, such as D-glucose and D-fructose, to hexose 6-phosphate (D-glucose 6-phosphate and D-fructose 6-phosphate, respectively). Has higher affinity for D-glucose. Mediates the initial step of glycolysis by catalyzing phosphorylation of D-glucose to D-glucose 6-phosphate. The polypeptide is Hexokinase (RAG5) (Kluyveromyces lactis (strain ATCC 8585 / CBS 2359 / DSM 70799 / NBRC 1267 / NRRL Y-1140 / WM37) (Yeast)).